Here is a 249-residue protein sequence, read N- to C-terminus: Chromosome-partitioning ATPase Soj (249 aa).

Positions 15, 16, 17, 18, 19, 20, 21, 22, 207, and 209 each coordinate ATP. Gly17 provides a ligand contact to ADP. Positions 19, 20, 21, 22, 207, and 209 each coordinate ADP. Mg(2+) is bound at residue Thr21.

Belongs to the ParA family. As to quaternary structure, monomer in the absence of nucleotides or presence of ADP, in the presence of ATP is found in a monomer-dimer equilibrium. ATP-binding is required for DNA-binding. Probably interacts with Spo0J.

The catalysed reaction is ATP + H2O = ADP + phosphate + H(+). Its activity is regulated as follows. ATPase activity is stimulated 10-fold in the presence of Spo0J and parS DNA (a plasmid centromere-like site or plasmid DNA itself). The first 20 residues of Spo0J stimulate its ATPase activity by 8%. Functionally, ATPase probably involved in chromosome partitioning. Cooperatively binds dsDNA, forming nucleoprotein filaments in a strictly ATP-dependent fashion. Can also bind ssDNA with lower affinity. This Thermus thermophilus (strain ATCC BAA-163 / DSM 7039 / HB27) protein is Chromosome-partitioning ATPase Soj.